A 269-amino-acid chain; its full sequence is Endo-1,3-1,4-beta-glycanase ExoK (269 aa).

The signal sequence occupies residues 1-29 (MTIDRYRRFARLAFIATLPLAGLATAAAA). The region spanning 40-252 (DDFDTLDTRV…RVAFTAAGDE (213 aa)) is the GH16 domain. Glu-138 serves as the catalytic Nucleophile. Glu-142 functions as the Proton donor in the catalytic mechanism.

This sequence belongs to the glycosyl hydrolase 16 family.

The protein localises to the secreted. It functions in the pathway glycan metabolism; exopolysaccharide biosynthesis. Its function is as follows. Cleaves high molecular weight succinoglycan to yield LMW succinoglycan. Dynamically regulates the molecular weight distribution of succinoglycan by cleaving nascent succinoglycan only during a limited period after its synthesis, perhaps before it undergoes a time-dependent change in its conformation or aggregation state. This is Endo-1,3-1,4-beta-glycanase ExoK (exoK) from Rhizobium meliloti (strain 1021) (Ensifer meliloti).